The following is a 76-amino-acid chain: Putative membrane protein insertion efficiency factor (76 aa).

This sequence belongs to the UPF0161 family.

The protein localises to the cell inner membrane. In terms of biological role, could be involved in insertion of integral membrane proteins into the membrane. This chain is Putative membrane protein insertion efficiency factor, found in Paraburkholderia phymatum (strain DSM 17167 / CIP 108236 / LMG 21445 / STM815) (Burkholderia phymatum).